Here is a 147-residue protein sequence, read N- to C-terminus: Hemoglobin subunit gamma-1 (147 aa).

The 145-residue stretch at 3 to 147 (NFTAEDKAAI…VASALGSRYH (145 aa)) folds into the Globin domain. Thr-13 carries the post-translational modification Phosphothreonine. Ser-45, Ser-51, and Ser-53 each carry phosphoserine. At Lys-60 the chain carries N6-acetyllysine. A heme b-binding site is contributed by His-64. Lys-83 carries the post-translational modification N6-acetyllysine. His-93 serves as a coordination point for heme b. At Cys-94 the chain carries S-nitrosocysteine. Residue Ser-140 is modified to Phosphoserine.

It belongs to the globin family. Heterotetramer of two alpha chains and two gamma chains in fetal hemoglobin (Hb F). In terms of tissue distribution, red blood cells.

In terms of biological role, gamma chains make up the fetal hemoglobin F, in combination with alpha chains. This chain is Hemoglobin subunit gamma-1 (HBG1), found in Plecturocebus moloch (Dusky titi monkey).